The sequence spans 431 residues: Cyclic GMP-AMP synthase-like receptor (431 aa).

ATP is bound by residues S73 and 85-87 (EFD). Residues E85, D87, and D212 each contribute to the Mg(2+) site. Position 212 (D212) interacts with GTP. ATP is bound by residues K290 and 304–308 (SYALK). Position 316 (E316) interacts with Mn(2+).

Belongs to the mab-21 family. Mg(2+) serves as cofactor. Requires Mn(2+) as cofactor.

The enzyme catalyses GTP + ATP = 2',3'-cGAMP + 2 diphosphate. It catalyses the reaction GTP + ATP = pppGp(2'-5')A + diphosphate. It carries out the reaction pppGp(2'-5')A = 2',3'-cGAMP + diphosphate. Nucleotidyltransferase that catalyzes the formation of cyclic GMP-AMP (2',3'-cGAMP) from ATP and GTP and plays a key role in innate immunity. Acts as a key sensor of double-stranded RNA (dsRNA), the presence of dsRNA in the cytoplasm being a danger signal that triggers the immune responses. Directly binds dsRNA, activating the nucleotidyltransferase activity, leading to synthesis of 2',3'-cGAMP, a second messenger that binds to and activates Sting, thereby triggering the immune response via activation of the NF-kappa-B transcription factor. In Frankliniella occidentalis (Western flower thrips), this protein is Cyclic GMP-AMP synthase-like receptor.